The primary structure comprises 1249 residues: Voltage-dependent calcium channel unc-36 (1249 aa).

Residues M1–S19 form the signal peptide. Over F20–T1228 the chain is Extracellular. N-linked (GlcNAc...) asparagine glycosylation is found at N100, N140, N146, N302, N520, N558, N757, N838, N903, N923, and N1130. The VWFA domain occupies N250–M479. A helical transmembrane segment spans residues S1229–I1248. A topological domain (cytoplasmic) is located at residue F1249.

As to expression, decendants of the cells AB and AB.p (that give rise to nearly all non-pharyngeal neurons), decendants of P1 (that give rise to body muscle) and cell lineages that give rise to the adult and juvenile motor neurons. Expressed in body wall, vulval muscle and pharyngeal muscle.

The protein localises to the membrane. May act as an auxiliary subunit of the unc-2 voltage-gated calcium channel which appears to trigger calcium-activated signaling pathways that control the serotonin response. Inhibiting serotonin sensitivity of the vulval muscles results in egg laying defects. May act in both neurons and muscle cells to enhance motor activity as it is required for coordinated movement. Has a role in neural depolarization-induced calcium influx and pharyngeal pumping. Involved in restricting the expression of the putative olfactory receptor str-2 to only one of the two AWC neurons. This is Voltage-dependent calcium channel unc-36 (unc-36) from Caenorhabditis elegans.